The primary structure comprises 189 residues: Elongation factor P (189 aa).

This sequence belongs to the elongation factor P family.

The protein localises to the cytoplasm. The protein operates within protein biosynthesis; polypeptide chain elongation. In terms of biological role, involved in peptide bond synthesis. Stimulates efficient translation and peptide-bond synthesis on native or reconstituted 70S ribosomes in vitro. Probably functions indirectly by altering the affinity of the ribosome for aminoacyl-tRNA, thus increasing their reactivity as acceptors for peptidyl transferase. In Pseudomonas savastanoi pv. phaseolicola (strain 1448A / Race 6) (Pseudomonas syringae pv. phaseolicola (strain 1448A / Race 6)), this protein is Elongation factor P.